We begin with the raw amino-acid sequence, 350 residues long: Phosphotriesterase-related protein (350 aa).

Positions 22, 24, 169, 201, 230, and 298 each coordinate a divalent metal cation.

It belongs to the metallo-dependent hydrolases superfamily. Phosphotriesterase family. The cofactor is a divalent metal cation.

This chain is Phosphotriesterase-related protein, found in Drosophila pseudoobscura pseudoobscura (Fruit fly).